The chain runs to 261 residues: uncharacterized protein (261 aa).

Transmembrane regions (helical) follow at residues 38-58 (FIYLILGGFGFYQPSNLITLL), 134-154 (YTLMVSLVAIFQCLISLLALI), 163-183 (ILINLSLTLNFFLLLFNTYVL), 195-215 (YMGLIVSYIISLLDFSALFFL), and 219-239 (HKSVLSVISSIFSFFLMCLKV).

The protein localises to the membrane. This is an uncharacterized protein from Dictyostelium discoideum (Social amoeba).